Reading from the N-terminus, the 368-residue chain is Protein-glutamate methylesterase/protein-glutamine glutaminase 2 (368 aa).

Residues 6-123 (KVLLVDDSAV…KEYLESAAGE (118 aa)) enclose the Response regulatory domain. Aspartate 57 carries the 4-aspartylphosphate modification. A CheB-type methylesterase domain is found at 169-355 (IAGANKIAAL…SLERIPQCVL (187 aa)). Residues serine 181, histidine 207, and aspartate 303 contribute to the active site.

This sequence belongs to the CheB family. Phosphorylated by CheA. Phosphorylation of the N-terminal regulatory domain activates the methylesterase activity.

It is found in the cytoplasm. It carries out the reaction [protein]-L-glutamate 5-O-methyl ester + H2O = L-glutamyl-[protein] + methanol + H(+). The catalysed reaction is L-glutaminyl-[protein] + H2O = L-glutamyl-[protein] + NH4(+). Functionally, involved in chemotaxis. Part of a chemotaxis signal transduction system that modulates chemotaxis in response to various stimuli. Catalyzes the demethylation of specific methylglutamate residues introduced into the chemoreceptors (methyl-accepting chemotaxis proteins or MCP) by CheR. Also mediates the irreversible deamidation of specific glutamine residues to glutamic acid. This is Protein-glutamate methylesterase/protein-glutamine glutaminase 2 from Hahella chejuensis (strain KCTC 2396).